Consider the following 83-residue polypeptide: MARKKGGSGAKNGRDSNPKYLGVKVYGGTEVSAGSILVRQRGTSIHPGNNVGCGKDYTLFAKADGVVTYHERKGRKLASIEAK.

The protein belongs to the bacterial ribosomal protein bL27 family.

In Treponema denticola (strain ATCC 35405 / DSM 14222 / CIP 103919 / JCM 8153 / KCTC 15104), this protein is Large ribosomal subunit protein bL27.